The following is a 98-amino-acid chain: Small ribosomal subunit protein bS20 (98 aa).

The protein belongs to the bacterial ribosomal protein bS20 family.

Binds directly to 16S ribosomal RNA. This is Small ribosomal subunit protein bS20 from Synechococcus sp. (strain CC9902).